The primary structure comprises 408 residues: Probable 2,3-bisphosphoglycerate-independent phosphoglycerate mutase (408 aa).

The protein belongs to the BPG-independent phosphoglycerate mutase family. A-PGAM subfamily.

It carries out the reaction (2R)-2-phosphoglycerate = (2R)-3-phosphoglycerate. It participates in carbohydrate degradation; glycolysis; pyruvate from D-glyceraldehyde 3-phosphate: step 3/5. Its function is as follows. Catalyzes the interconversion of 2-phosphoglycerate and 3-phosphoglycerate. This chain is Probable 2,3-bisphosphoglycerate-independent phosphoglycerate mutase, found in Deinococcus geothermalis (strain DSM 11300 / CIP 105573 / AG-3a).